A 587-amino-acid polypeptide reads, in one-letter code: Aspartate--tRNA ligase (587 aa).

E174 is a binding site for L-aspartate. Residues 198-201 (QITK) are aspartate. R220 contacts L-aspartate. ATP is bound by residues 220-222 (RDE) and Q229. H443 contributes to the L-aspartate binding site. Position 477 (E477) interacts with ATP. R484 provides a ligand contact to L-aspartate. 529–532 (GLDR) serves as a coordination point for ATP.

It belongs to the class-II aminoacyl-tRNA synthetase family. Type 1 subfamily. In terms of assembly, homodimer.

It localises to the cytoplasm. It carries out the reaction tRNA(Asp) + L-aspartate + ATP = L-aspartyl-tRNA(Asp) + AMP + diphosphate. Functionally, catalyzes the attachment of L-aspartate to tRNA(Asp) in a two-step reaction: L-aspartate is first activated by ATP to form Asp-AMP and then transferred to the acceptor end of tRNA(Asp). This Streptococcus pneumoniae (strain ATCC 700669 / Spain 23F-1) protein is Aspartate--tRNA ligase.